A 760-amino-acid polypeptide reads, in one-letter code: Prolyl endopeptidase FAP (760 aa).

Residues 1-4 (MKTW) are Cytoplasmic-facing. A helical; Signal-anchor for type II membrane protein membrane pass occupies residues 5–25 (VKIVFGVATSAVLALLVMCIV). Topologically, residues 26–760 (LRPSRVHNSE…FLKQCFSLSD (735 aa)) are extracellular. Asparagine 49, asparagine 92, and asparagine 99 each carry an N-linked (GlcNAc...) asparagine glycan. The substrate site is built by glutamate 203 and glutamate 204. N-linked (GlcNAc...) asparagine glycosylation is found at asparagine 227 and asparagine 314. Disulfide bonds link cysteine 321–cysteine 332, cysteine 438–cysteine 441, and cysteine 448–cysteine 466. Serine 624 serves as the catalytic Charge relay system. A disulfide bond links cysteine 643 and cysteine 755. The N-linked (GlcNAc...) asparagine glycan is linked to asparagine 679. Catalysis depends on charge relay system residues aspartate 702 and histidine 734.

It belongs to the peptidase S9B family. Homodimer; homodimerization is required for activity of both plasma membrane and soluble forms. The monomer is inactive. Heterodimer with DPP4. Interacts with PLAUR; the interaction occurs at the cell surface of invadopodia membranes. Interacts with ITGB1. Interacts with ITGA3. Associates with integrin alpha-3/beta-1; the association occurs in a collagen-dependent manner at the cell surface of invadopodia membranes. In terms of processing, N-glycosylated. Post-translationally, the N-terminus may be blocked. Expressed in adipose tissue. Expressed in the dermal fibroblasts in the fetal skin. Expressed in the granulation tissue of healing wounds and on reactive stromal fibroblast in epithelial cancers. Expressed in activated fibroblast-like synoviocytes from inflamed synovial tissues. Expressed in activated hepatic stellate cells (HSC) and myofibroblasts from cirrhotic liver, but not detected in normal liver. Expressed in glioma cells (at protein level). Expressed in glioblastomas and glioma cells. Isoform 1 and isoform 2 are expressed in melanoma, carcinoma and fibroblast cell lines.

The protein resides in the cell surface. The protein localises to the cell membrane. It is found in the cell projection. Its subcellular location is the lamellipodium membrane. It localises to the invadopodium membrane. The protein resides in the ruffle membrane. The protein localises to the membrane. It is found in the secreted. Its subcellular location is the cytoplasm. It catalyses the reaction Hydrolysis of Pro-|-Xaa &gt;&gt; Ala-|-Xaa in oligopeptides.. The catalysed reaction is Release of an N-terminal dipeptide, Xaa-Yaa-|-Zaa-, from a polypeptide, preferentially when Yaa is Pro, provided Zaa is neither Pro nor hydroxyproline.. Gelatinase activity is inhibited by serine-protease inhibitors, such as phenylmethylsulfonyl fluoride (PMSF), 4-(2-aminoethyl)-benzenesulfonyl fluoride hydrochloride (AEBSF), 4-amidino phenylsulfonyl fluoride (APSF) and diisopropyl fluorophosphate (DFP), N-ethylmaleimide (NEM) and phenylmethylsulfonyl fluoride (PMSF). Dipeptidyl peptidase activity is inhibited by 2,2'-azino-bis(3-ethylbenzthiazoline-6-sulfonic acid), diisopropylfluorophosphate (DFP). Prolyl endopeptidase activity is inhibited by the boronic acid peptide Ac-Gly-BoroPro, Ac-Gly-Pro-chloromethyl ketone and Thr-Ser-Gly-chloromethyl ketone. In terms of biological role, cell surface glycoprotein serine protease that participates in extracellular matrix degradation and involved in many cellular processes including tissue remodeling, fibrosis, wound healing, inflammation and tumor growth. Both plasma membrane and soluble forms exhibit post-proline cleaving endopeptidase activity, with a marked preference for Ala/Ser-Gly-Pro-Ser/Asn/Ala consensus sequences, on substrate such as alpha-2-antiplasmin SERPINF2 and SPRY2. Degrade also gelatin, heat-denatured type I collagen, but not native collagen type I and IV, vitronectin, tenascin, laminin, fibronectin, fibrin or casein. Also has dipeptidyl peptidase activity, exhibiting the ability to hydrolyze the prolyl bond two residues from the N-terminus of synthetic dipeptide substrates provided that the penultimate residue is proline, with a preference for Ala-Pro, Ile-Pro, Gly-Pro, Arg-Pro and Pro-Pro. Natural neuropeptide hormones for dipeptidyl peptidase are the neuropeptide Y (NPY), peptide YY (PYY), substance P (TAC1) and brain natriuretic peptide 32 (NPPB). The plasma membrane form, in association with either DPP4, PLAUR or integrins, is involved in the pericellular proteolysis of the extracellular matrix (ECM), and hence promotes cell adhesion, migration and invasion through the ECM. Plays a role in tissue remodeling during development and wound healing. Participates in the cell invasiveness towards the ECM in malignant melanoma cancers. Enhances tumor growth progression by increasing angiogenesis, collagen fiber degradation and apoptosis and by reducing antitumor response of the immune system. Promotes glioma cell invasion through the brain parenchyma by degrading the proteoglycan brevican. Acts as a tumor suppressor in melanocytic cells through regulation of cell proliferation and survival in a serine protease activity-independent manner. This chain is Prolyl endopeptidase FAP, found in Homo sapiens (Human).